Reading from the N-terminus, the 458-residue chain is Methylenetetrahydrofolate--tRNA-(uracil-5-)-methyltransferase TrmFO (458 aa).

Glycine 12–glycine 17 is a binding site for FAD.

The protein belongs to the MnmG family. TrmFO subfamily. FAD is required as a cofactor.

The protein resides in the cytoplasm. It catalyses the reaction uridine(54) in tRNA + (6R)-5,10-methylene-5,6,7,8-tetrahydrofolate + NADH + H(+) = 5-methyluridine(54) in tRNA + (6S)-5,6,7,8-tetrahydrofolate + NAD(+). It carries out the reaction uridine(54) in tRNA + (6R)-5,10-methylene-5,6,7,8-tetrahydrofolate + NADPH + H(+) = 5-methyluridine(54) in tRNA + (6S)-5,6,7,8-tetrahydrofolate + NADP(+). Catalyzes the folate-dependent formation of 5-methyl-uridine at position 54 (M-5-U54) in all tRNAs. The chain is Methylenetetrahydrofolate--tRNA-(uracil-5-)-methyltransferase TrmFO from Deinococcus geothermalis (strain DSM 11300 / CIP 105573 / AG-3a).